A 359-amino-acid chain; its full sequence is Tyrosine-protein phosphatase non-receptor type 7 (359 aa).

Positions 1-34 (MVQACEGRSRAQLPTLSLGADMTQPPPAKAPAKK) are disordered. An interaction with MAP kinases region spans residues 38–51 (LQERRGSSVALMLD). A Phosphoserine modification is found at serine 44. Phosphothreonine is present on threonine 66. Phosphoserine occurs at positions 93 and 143. A Tyrosine-protein phosphatase domain is found at 97–349 (LEEEFLKIPS…QFLHHTLALY (253 aa)). Substrate contacts are provided by residues aspartate 257, 290-296 (CSAGIGR), and glutamine 334. Cysteine 290 functions as the Phosphocysteine intermediate in the catalytic mechanism. Cysteine 290 carries the post-translational modification Cysteine sulfenic acid (-SOH).

The protein belongs to the protein-tyrosine phosphatase family. Non-receptor class subfamily. In terms of processing, oxidized at active site cysteine. Treatment with pervanadate (vanadate and H(2)O(2)) or with antigen enhanced oxidation of active site cysteine.

The protein resides in the cytoplasm. The protein localises to the cytoskeleton. The enzyme catalyses O-phospho-L-tyrosyl-[protein] + H2O = L-tyrosyl-[protein] + phosphate. Inhibited in cells after FCER1A triggering. In terms of biological role, may play a role in the regulation of T and B-lymphocyte development and signal transduction. This Rattus norvegicus (Rat) protein is Tyrosine-protein phosphatase non-receptor type 7 (Ptpn7).